The chain runs to 392 residues: Formate-dependent phosphoribosylglycinamide formyltransferase (392 aa).

Residues 22–23 (EL) and E82 contribute to the N(1)-(5-phospho-beta-D-ribosyl)glycinamide site. ATP is bound by residues R114, K155, 160–165 (SSGKGQ), 195–198 (EGVV), and E203. The region spanning 119–308 (RLAAEELQLP…EFALHVRAFL (190 aa)) is the ATP-grasp domain. Mg(2+) is bound by residues E267 and E279. Residues D286, K355, and 362–363 (RR) each bind N(1)-(5-phospho-beta-D-ribosyl)glycinamide.

It belongs to the PurK/PurT family. In terms of assembly, homodimer.

The enzyme catalyses N(1)-(5-phospho-beta-D-ribosyl)glycinamide + formate + ATP = N(2)-formyl-N(1)-(5-phospho-beta-D-ribosyl)glycinamide + ADP + phosphate + H(+). Its pathway is purine metabolism; IMP biosynthesis via de novo pathway; N(2)-formyl-N(1)-(5-phospho-D-ribosyl)glycinamide from N(1)-(5-phospho-D-ribosyl)glycinamide (formate route): step 1/1. In terms of biological role, involved in the de novo purine biosynthesis. Catalyzes the transfer of formate to 5-phospho-ribosyl-glycinamide (GAR), producing 5-phospho-ribosyl-N-formylglycinamide (FGAR). Formate is provided by PurU via hydrolysis of 10-formyl-tetrahydrofolate. This is Formate-dependent phosphoribosylglycinamide formyltransferase from Shigella boydii serotype 4 (strain Sb227).